Consider the following 292-residue polypeptide: 4-hydroxy-tetrahydrodipicolinate synthase (292 aa).

T46 contributes to the pyruvate binding site. The Proton donor/acceptor role is filled by Y134. K162 (schiff-base intermediate with substrate) is an active-site residue. I204 contributes to the pyruvate binding site.

Belongs to the DapA family. In terms of assembly, homotetramer; dimer of dimers.

Its subcellular location is the cytoplasm. The enzyme catalyses L-aspartate 4-semialdehyde + pyruvate = (2S,4S)-4-hydroxy-2,3,4,5-tetrahydrodipicolinate + H2O + H(+). The protein operates within amino-acid biosynthesis; L-lysine biosynthesis via DAP pathway; (S)-tetrahydrodipicolinate from L-aspartate: step 3/4. Its function is as follows. Catalyzes the condensation of (S)-aspartate-beta-semialdehyde [(S)-ASA] and pyruvate to 4-hydroxy-tetrahydrodipicolinate (HTPA). This chain is 4-hydroxy-tetrahydrodipicolinate synthase, found in Moorella thermoacetica (strain ATCC 39073 / JCM 9320).